Here is a 149-residue protein sequence, read N- to C-terminus: MVSFFDIYTKASIVEAVRFSFLNTFQLKELGLPIKEIAVPLGTLVFLFVVIITLIPLLIIGNLIWTNLRLIERENTQQYQLVFGYSLIVSDIVGFAIVFFGAILGTNLKSVELFIALGWMMMLGSLIALGTTANLVSSIYLYIKLALKR.

Helical transmembrane passes span 39-61 (VPLG…LIIG), 82-104 (VFGY…GAIL), and 119-141 (WMMM…SIYL).

The protein to M.pneumoniae MPN_090.

The protein resides in the cell membrane. This is an uncharacterized protein from Mycoplasma pneumoniae (strain ATCC 29342 / M129 / Subtype 1) (Mycoplasmoides pneumoniae).